We begin with the raw amino-acid sequence, 375 residues long: POU domain, class 3, transcription factor 1-A (375 aa).

Disordered stretches follow at residues 1–29 (MAAT…RMHQ), 67–138 (PASD…HQPL), and 151–200 (MLGP…PSSD). Polar residues-rich tracts occupy residues 107-117 (VHQQSPSSHAW), 129-138 (SPSSNSHQPL), and 151-160 (MLGPQASSLH). Basic and acidic residues predominate over residues 162–177 (SMRDPLHDDPGVHDTQ). Residues 194–268 (EDAPSSDDLE…LLNKWLEETD (75 aa)) form the POU-specific domain. A DNA-binding region (homeobox) is located at residues 286–345 (KRKKRTSIEVGVKGALENHFLKCPKPSAHEITSLADSLQLEKEVVRVWFCNRRQKEKRMT).

Belongs to the POU transcription factor family. Class-3 subfamily. In embryos at the neural fold stage, localized primarily in the anterior neural plate, and localized mostly in the anterior region of the nerve cord of neurula stage embryos. In tailbud stages, expressed predominantly in the eye and brain, with weak expression along the length of the nerve cord. In adults, expressed in skin and brain.

The protein resides in the nucleus. Its function is as follows. Acts as a transcription factor. May play a role in neuronal differentiation. This chain is POU domain, class 3, transcription factor 1-A (pou3f1-a), found in Xenopus laevis (African clawed frog).